A 1004-amino-acid polypeptide reads, in one-letter code: Polyhomeotic-like protein 1 (1004 aa).

Positions 1-22 (METESEQNSNSTNGSSSSGGSS) are enriched in low complexity. Disordered stretches follow at residues 1–24 (METESEQNSNSTNGSSSSGGSSRP), 212–241 (NQQASAQGPQMQGSTQKAIPPGASPVSSLS), 261–355 (SLNL…NLTR), 432–512 (QQQQ…QLGA), 556–589 (RGMPGTVQSGQAHLASSPPSSQAPGALQECPPTL), and 636–672 (TLAVKRKADSEEERDDVSTLGSMLPAKASPVAESPKV). Over residues 212-228 (NQQASAQGPQMQGSTQK) the composition is skewed to polar residues. Positions 279–303 (MGPGGGGQAHGGLGQLPSSGMGGGS) are enriched in gly residues. 2 stretches are compositionally biased toward polar residues: residues 319–329 (QTVTVSQGSQT) and 344–355 (SGQQNVGMNLTR). Residues 432 to 447 (QQQQQQQQPQATTLTA) show a composition bias toward low complexity. Pro residues predominate over residues 448–458 (PQPPQVPPTQQ). Low complexity predominate over residues 459–482 (VPPSQSQQQAQTLVVQPMLQSSPL). Residues 483–495 (SLPPDAAPKPPIP) are compositionally biased toward pro residues. The span at 566–583 (QAHLASSPPSSQAPGALQ) shows a compositional bias: low complexity. The residue at position 645 (S645) is a Phosphoserine. Residue K763 forms a Glycyl lysine isopeptide (Lys-Gly) (interchain with G-Cter in SUMO2) linkage. The FCS-type zinc finger occupies 791–825 (LDKKANLLKCEYCGKYAPAEQFRGSKRFCSMTCAK). Zn(2+) contacts are provided by C800, C803, C819, and C823. Residues 848–928 (ANYARVRRRG…APPTPELHGI (81 aa)) form a disordered region. Phosphoserine is present on S898. Phosphothreonine is present on T922. An SAM domain is found at 940–1004 (WSVEEVYEFI…CAKINVLKET (65 aa)).

As to quaternary structure, homodimer. Component of a PRC1-like complex. Interacts with RNF2 and CBX7. Interacts with PHC2, PHC2 and BMI1.

It is found in the nucleus. Component of a Polycomb group (PcG) multiprotein PRC1-like complex, a complex class required to maintain the transcriptionally repressive state of many genes, including Hox genes, throughout development. PcG PRC1 complex acts via chromatin remodeling and modification of histones; it mediates monoubiquitination of histone H2A 'Lys-119', rendering chromatin heritably changed in its expressibility. Required for proper control of cellular levels of GMNN expression. This Homo sapiens (Human) protein is Polyhomeotic-like protein 1 (PHC1).